We begin with the raw amino-acid sequence, 201 residues long: MTTRIVVAQILGAHGVHGRVKLKSFTADETAVFGYAPLTDESGRREFKLRRTGTGKDHFLAEVDGITGKEAADALRGTRLYIERDRLPAPEDEDEFYHADLIGLDTVTADDQPFGTIKAIYDFGAGDMLEIRHVSEKTVFLPFTKACVPVIEIAAGRVVVEPPANFFAPAGPQPAEGEEMPDGALEALEGEEAGAGTAPQP.

In terms of domain architecture, PRC barrel spans 92–166 (DEDEFYHADL…RVVVEPPANF (75 aa)). A disordered region spans residues 169–201 (PAGPQPAEGEEMPDGALEALEGEEAGAGTAPQP).

This sequence belongs to the RimM family. In terms of assembly, binds ribosomal protein uS19.

Its subcellular location is the cytoplasm. An accessory protein needed during the final step in the assembly of 30S ribosomal subunit, possibly for assembly of the head region. Essential for efficient processing of 16S rRNA. May be needed both before and after RbfA during the maturation of 16S rRNA. It has affinity for free ribosomal 30S subunits but not for 70S ribosomes. The chain is Ribosome maturation factor RimM from Rhodospirillum centenum (strain ATCC 51521 / SW).